A 1222-amino-acid chain; its full sequence is Serine/threonine-protein kinase WNK4 (1222 aa).

Residues 1–17 (MLAPRNTETGVHMSQTE) are compositionally biased toward polar residues. The interval 1 to 163 (MLAPRNTETG…KEDTETQAVA (163 aa)) is disordered. Phosphoserine is present on Ser95. Positions 135-152 (EPPRVPDAAARERRREQE) are enriched in basic and acidic residues. Residues Lys154 and Lys172 each participate in a glycyl lysine isopeptide (Lys-Gly) (interchain with G-Cter in ubiquitin) cross-link. A Protein kinase domain is found at 171-429 (LKFDIEIGRG…IQDLLTHAFF (259 aa)). Position 181 (Ser181) interacts with ATP. Residues Lys183, Lys223, and Lys238 each participate in a glycyl lysine isopeptide (Lys-Gly) (interchain with G-Cter in ubiquitin) cross-link. ATP contacts are provided by residues 251–254 (TELM) and Lys301. Catalysis depends on Asp318, which acts as the Proton acceptor. Residue Lys325 forms a Glycyl lysine isopeptide (Lys-Gly) (interchain with G-Cter in ubiquitin) linkage. Phosphoserine; by autocatalysis occurs at positions 328 and 332. Glycyl lysine isopeptide (Lys-Gly) (interchain with G-Cter in ubiquitin) cross-links involve residues Lys384, Lys390, Lys447, and Lys451. The segment at 527–562 (LEVLPPDSGPPPATVSMTPGPPSAFPPEPEEPEADQ) is disordered. Positions 533 to 553 (DSGPPPATVSMTPGPPSAFPP) are enriched in pro residues. Residues 554–564 (EPEEPEADQHQ) form an interaction with KLHL3 region. Ser572 is subject to Phosphoserine. 5 disordered regions span residues 591-612 (FLDA…PAEP), 626-679 (RSGP…SVSD), 747-809 (DAGP…GTPF), 836-873 (QVSS…SPLP), and 927-1087 (SPGL…QPSP). Over residues 627–638 (SGPGSDFSPGDS) the composition is skewed to low complexity. The span at 659 to 672 (NPVKTLRRRPRSRL) shows a compositional bias: basic residues. Low complexity-rich tracts occupy residues 792 to 809 (FSTS…GTPF) and 845 to 873 (APSS…SPLP). The span at 935–946 (PPAPPGPLPSMP) shows a compositional bias: pro residues. A compositionally biased stretch (polar residues) spans 953 to 963 (DQESLSAQTAE). Lys990 is covalently cross-linked (Glycyl lysine isopeptide (Lys-Gly) (interchain with G-Cter in ubiquitin)). Residues 996–999 (RFQV) carry the RFXV motif motif. Residue Ser1014 is modified to Phosphoserine. The span at 1044–1056 (ETREALAESDRAA) shows a compositional bias: basic and acidic residues. The segment covering 1076 to 1086 (GGSSPILSQPS) has biased composition (polar residues). Glycyl lysine isopeptide (Lys-Gly) (interchain with G-Cter in ubiquitin) cross-links involve residues Lys1123, Lys1136, and Lys1137. The disordered stretch occupies residues 1169–1222 (SKGSFPTSRRNSLQRSDLPGPGIMRRNSLSGSSTGSQEQRASKGVTFAGDVGRM). Polar residues-rich tracts occupy residues 1172–1183 (SFPTSRRNSLQR) and 1195–1207 (NSLS…SQEQ). Ser1196 bears the Phosphoserine mark.

The protein belongs to the protein kinase superfamily. Ser/Thr protein kinase family. WNK subfamily. As to quaternary structure, interacts with the C-terminal region of KCNJ1. Interacts with WNK1 and WNK3. Interacts with KLHL3. Mg(2+) serves as cofactor. Post-translationally, autophosphorylated at Ser-328 and Ser-332, promoting its activation. Phosphorylated by WNK1 and WNK3. Phosphorylated at Ser-572 in a MAP3K15/ASK3-dependent process in response to osmotic stress or hypotonic low-chloride stimulation. In terms of processing, ubiquitinated by the BCR(KLHL3) complex, leading to its degradation. Also ubiquitinated by the BCR(KLHL2) complex.

It localises to the cell junction. It is found in the tight junction. The catalysed reaction is L-seryl-[protein] + ATP = O-phospho-L-seryl-[protein] + ADP + H(+). The enzyme catalyses L-threonyl-[protein] + ATP = O-phospho-L-threonyl-[protein] + ADP + H(+). With respect to regulation, activation requires autophosphorylation of Ser-328 and Ser-332. Autophosphorylation and subsequent activation is inhibited by increases in intracellular ionic strength: Cl(-) potently inhibits WNK4 kinase activity via direct binding. Also inhibited by K(+) ions. Its function is as follows. Serine/threonine-protein kinase component of the WNK4-SPAK/OSR1 kinase cascade, which acts as a key regulator of ion transport in the distal nephron and blood pressure. The WNK4-SPAK/OSR1 kinase cascade is composed of WNK4, which mediates phosphorylation and activation of downstream kinases OXSR1/OSR1 and STK39/SPAK. Following activation, OXSR1/OSR1 and STK39/SPAK catalyze phosphorylation of ion cotransporters, such as SLC12A1/NKCC2, SLC12A2/NKCC1, SLC12A3/NCC, SLC12A5/KCC2 or SLC12A6/KCC3, regulating their activity. Acts as a molecular switch that regulates the balance between renal salt reabsorption and K(+) secretion by modulating the activities of renal transporters and channels, including the Na-Cl cotransporter SLC12A3/NCC and the K(+) channel, KCNJ1/ROMK. Regulates NaCl reabsorption in the distal nephron by activating the thiazide-sensitive Na-Cl cotransporter SLC12A3/NCC in distal convoluted tubule cells of kidney: activates SLC12A3/NCC in a OXSR1/OSR1- and STK39/SPAK-dependent process. Also acts as a scaffold protein independently of its protein kinase activity: negatively regulates cell membrane localization of various transporters and channels (CFTR, KCNJ1/ROMK, SLC4A4, SLC26A9 and TRPV4) by clathrin-dependent endocytosis. Also inhibits the activity of the epithelial Na(+) channel (ENaC) SCNN1A, SCNN1B, SCNN1D in a inase-independent mechanism. May also phosphorylate NEDD4L. The polypeptide is Serine/threonine-protein kinase WNK4 (Rattus norvegicus (Rat)).